The primary structure comprises 121 residues: Small ribosomal subunit protein bS6 (121 aa).

This sequence belongs to the bacterial ribosomal protein bS6 family.

Binds together with bS18 to 16S ribosomal RNA. The protein is Small ribosomal subunit protein bS6 of Rickettsia peacockii (strain Rustic).